Consider the following 429-residue polypeptide: Glutamate-1-semialdehyde 2,1-aminomutase 2 (429 aa).

K267 carries the N6-(pyridoxal phosphate)lysine modification.

It belongs to the class-III pyridoxal-phosphate-dependent aminotransferase family. HemL subfamily. As to quaternary structure, homodimer. Requires pyridoxal 5'-phosphate as cofactor.

Its subcellular location is the cytoplasm. The enzyme catalyses (S)-4-amino-5-oxopentanoate = 5-aminolevulinate. It functions in the pathway porphyrin-containing compound metabolism; protoporphyrin-IX biosynthesis; 5-aminolevulinate from L-glutamyl-tRNA(Glu): step 2/2. The chain is Glutamate-1-semialdehyde 2,1-aminomutase 2 from Brevibacillus brevis (strain 47 / JCM 6285 / NBRC 100599).